The primary structure comprises 141 residues: Large ribosomal subunit protein uL16 (141 aa).

A compositionally biased stretch (basic residues) spans 1–16 (MLMPRKPPKGFRKPHH). The interval 1–27 (MLMPRKPPKGFRKPHHPDRSGASKGGN) is disordered.

This sequence belongs to the universal ribosomal protein uL16 family. In terms of assembly, part of the 50S ribosomal subunit.

Binds 23S rRNA and is also seen to make contacts with the A and possibly P site tRNAs. In Salinispora arenicola (strain CNS-205), this protein is Large ribosomal subunit protein uL16.